The sequence spans 589 residues: MPPPSPDSENGFYPGLPSSMNPAFFPSFSPVSPHGCTGLSVPTSGGGGGGFGGPFSATAVPPPPPPAMNIPQQQPPPPAAPQQPQSRRSPVSPQLQQQHQAAAAAFLQQRNSYNHHQPLLKQSPWSNHQSSGWGTGSMSWGAMHGRDHRRTGNMGIPGTMNQISPLKKPFSGNVIAPPKFTRSTPSLTPKSWIEDNVFRTDNNSNTLLPLQVRSSLQLPAWGSDSLQDSWCTAAGTSRIDQDRSRMYDSLNMHSLENSLIDIMRAEHDPLKGRLSYPHPGTDNLLMLNGRSSLFPIDDGLLDDGHSDQVGVLNSPTCYSAHQNGERIERFSRKVFVGGLPPDIDEDEITASFRRFGPLVVDWPHKAESKSYFPPKGYAFLLFQEESSVQALIDACIEEDGKLYLCVSSPTIKDKPVQIRPWNLSDSDFVMDGSQPLDPRKTIFVGGVPRPLRAVELAMIMDRLYGGVCYAGIDTDPELKYPKGAGRVAFSNQQSYIAAISARFVQLQHGDIDKRVEVKPYVLDDQMCDECQGARCGGKFAPFFCANVTCLQYYCEFCWANIHSRAGREFHKPLVKEGADRPRQIHFRWN.

2 disordered regions span residues 1 to 103 and 118 to 140; these read MPPP…QAAA and PLLK…SMSW. Positions 24–33 are enriched in low complexity; that stretch reads FFPSFSPVSP. Gly residues predominate over residues 44–53; it reads SGGGGGGFGG. Residues 60 to 81 show a composition bias toward pro residues; the sequence is VPPPPPPAMNIPQQQPPPPAAP. 2 stretches are compositionally biased toward low complexity: residues 82–103 and 130–140; these read QQPQ…QAAA and SSGWGTGSMSW. Position 89 is a phosphoserine (Ser-89). 2 consecutive RRM domains span residues 332–423 and 440–522; these read RKVF…PWNL and KTIF…PYVL.

It belongs to the RRM CPEB family. Interacts with TENT2/GLD2.

The protein resides in the cytoplasm. Functionally, may play a role in translational regulation of stored mRNAs in transcriptionally inactive haploid spermatids. Binds to poly(U) RNA oligomers. Required for cell cycle progression, specifically for the transition from metaphase to anaphase. The sequence is that of Cytoplasmic polyadenylation element-binding protein 2 (CPEB2) from Homo sapiens (Human).